The chain runs to 348 residues: Tripartite motif-containing protein 16-like protein (348 aa).

In terms of domain architecture, B30.2/SPRY spans 139–337 (YWTSKPEPST…RIVDLGEEPE (199 aa)).

The protein belongs to the TRIM/RBCC family.

It is found in the cytoplasm. The sequence is that of Tripartite motif-containing protein 16-like protein (TRIM16L) from Homo sapiens (Human).